A 1322-amino-acid polypeptide reads, in one-letter code: Flocculation protein FLO9 (1322 aa).

A signal peptide spans 1–24 (MSLAHYCLLLAIVTLLGLTNVVSA). A PA14 domain is found at 74-249 (GGQTDISIDY…GTTVSDDFEG (176 aa)). N-linked (GlcNAc...) asparagine glycans are attached at residues Asn-135, Asn-187, Asn-203, Asn-257, Asn-262, and Asn-270. Residues 197–240 (NGSPPDNITGTVYMYAGFYYPMKIVYSNAVAWGTLPISVTLPDG) are sugar recognition. Repeat copies occupy residues 278–322 (TTTE…STII), 323–367 (TTTE…TTAI), 368–412 (TTTE…TTAM), 413–457 (TTTQ…TTAM), 458–502 (TTTQ…TTAM), 503–547 (TTTQ…TTAM), 548–592 (TTTQ…TTAI), 593–637 (TTTE…TTAI), 638–682 (TTTQ…TTAM), 683–727 (TTTQ…TTAM), 728–772 (TTTQ…GLIS), 773–817 (TTTE…GLVT), and 818–862 (TTTE…ISSS). Residues 278-862 (TTTEPWTGTF…KTPTTAISSS (585 aa)) form a 13 X 45 AA approximate tandem repeats, Thr-rich region. The N-linked (GlcNAc...) asparagine glycan is linked to Asn-329. N-linked (GlcNAc...) asparagine glycans are attached at residues Asn-419, Asn-464, Asn-509, Asn-554, Asn-599, Asn-644, Asn-689, and Asn-734. Disordered stretches follow at residues 770–799 (LISTTTEPWTGTFTSTSTEMTTVTGTNGQP) and 816–843 (VTTTTEPWTGTFTSTSTEMTTITGTNGQ). Low complexity-rich tracts occupy residues 773–795 (TTTEPWTGTFTSTSTEMTTVTGT) and 817–840 (TTTTEPWTGTFTSTSTEMTTITGT). Asn-888 carries N-linked (GlcNAc...) asparagine glycosylation. Tandem repeats lie at residues 892–906 (VISSSVISSSDTSSL), 907–921 (VISSSVTSSLVTSSP), and 922–936 (VISSSFISSPVISST). Residues 892–936 (VISSSVISSSDTSSLVISSSVTSSLVTSSPVISSSFISSPVISST) are 3 X 15 AA approximate repeats, Ser-rich. Low complexity predominate over residues 950–1001 (SVIPTSSSTSGSSESETGSASSASSSSSISSESPKSTYSSSSLPPVTSATTS). A disordered region spans residues 950 to 1018 (SVIPTSSSTS…PPVTTTKTSE (69 aa)). Positions 1002-1018 (QEITSSLPPVTTTKTSE) are enriched in polar residues. A run of 3 repeats spans residues 1013–1063 (TTKT…CPIS), 1085–1135 (TTET…CPIS), and 1136–1186 (TTES…RPQT). The interval 1013–1186 (TTKTSEQTTL…TVYSTWRPQT (174 aa)) is 3 X 51 AA approximate repeats, Thr-rich. A compositionally biased stretch (polar residues) spans 1186 to 1196 (TTNEQSVSSKM). Disordered stretches follow at residues 1186-1221 (TTNEQSVSSKMNSATSETTTNTGAAETTTSTGAAET) and 1256-1284 (SETGNTKSLTSSGLSTMSQQPRSTPASSM). A compositionally biased stretch (low complexity) spans 1197-1221 (NSATSETTTNTGAAETTTSTGAAET). The span at 1257–1284 (ETGNTKSLTSSGLSTMSQQPRSTPASSM) shows a compositional bias: polar residues. A lipid anchor (GPI-anchor amidated glycine) is attached at Gly-1299. A propeptide spans 1300 to 1322 (SANSLLAGSGLSVFIASLLLAII) (removed in mature form).

The protein belongs to the flocculin family. Post-translationally, the GPI-anchor is attached to the protein in the endoplasmic reticulum and serves to target the protein to the cell surface. There, the glucosamine-inositol phospholipid moiety is cleaved off and the GPI-modified mannoprotein is covalently attached via its lipidless GPI glycan remnant to the 1,6-beta-glucan of the outer cell wall layer.

It localises to the secreted. The protein localises to the cell wall. The protein resides in the membrane. Cell wall protein that participates directly in adhesive cell-cell interactions during yeast flocculation, a reversible, asexual and Ca(2+)-dependent process in which cells adhere to form aggregates (flocs) consisting of thousands of cells. The lectin-like protein sticks out of the cell wall of flocculent cells and selectively binds mannose residues in the cell walls of adjacent cells. This Saccharomyces cerevisiae (strain ATCC 204508 / S288c) (Baker's yeast) protein is Flocculation protein FLO9 (FLO9).